A 556-amino-acid chain; its full sequence is MNIVEQMKQKLKEEIKEAVIRSGVATEADVPSVILETPKDKAHGDYSTNVAMQLARVAKKAPRMIAEDIVRHFNGEAVFVKKVDIAGPGFINFYMDNRYLTELVPAILQAGDAYGETNVGQGQKVQVEFVSANPTGSLHLGHARGAAVGDSLCNILKKAGFDVTREYYINDAGNQIANLAKSVEARYFQALGIKKDMPEDGYFGEDIIELGKKLAEEHGDKFVALDEQERLQLFREYGLAFEMDKIKKDLADFRVTFDVWYSETSLYHNGKIDKALETLREKGHIYEQDGATWFRSTTFGDDKDRVLIKQDGTYTYLLPDIAYHQDKLERGFEKIINIWGADHHGYIPRMKAAIAALGYDPDVLEVEIIQLVSLYQNGEKVRMSKRTGKAVTLRDLMEEVGLDATRYFFAMRSSDTHLDFDMDLAVSQSNENPVYYAQYAHARVCSMLRQGEEQGWRYDGDLSFTYELAEKEIDLLKKLGEFPSAVAEAAVKRSPHRMTNYIFDLASALHSFYNAEKVLDAANVEKSRARLALMKAVQITLKNALALVGVHAPEKM.

Positions 132–142 match the 'HIGH' region motif; sequence ANPTGSLHLGH.

It belongs to the class-I aminoacyl-tRNA synthetase family. Monomer.

It localises to the cytoplasm. The catalysed reaction is tRNA(Arg) + L-arginine + ATP = L-arginyl-tRNA(Arg) + AMP + diphosphate. In Anoxybacillus flavithermus (strain DSM 21510 / WK1), this protein is Arginine--tRNA ligase.